We begin with the raw amino-acid sequence, 127 residues long: Putative iron-sulfur cluster insertion protein ErpA (127 aa).

Positions 1–14 (MNTPFNDGSGQTDP) are enriched in polar residues. Residues 1–20 (MNTPFNDGSGQTDPMTDIPT) form a disordered region. Positions 55, 119, and 121 each coordinate iron-sulfur cluster.

It belongs to the HesB/IscA family. Homodimer. Iron-sulfur cluster is required as a cofactor.

In terms of biological role, required for insertion of 4Fe-4S clusters. This Nitrosospira multiformis (strain ATCC 25196 / NCIMB 11849 / C 71) protein is Putative iron-sulfur cluster insertion protein ErpA.